Consider the following 1676-residue polypeptide: Protein TIC 214 (1676 aa).

6 consecutive transmembrane segments (helical) span residues 24–44 (KIIN…ALAL), 70–90 (LILG…YIAF), 93–113 (PYTL…GNNL), 130–150 (LEIL…TCIF), 170–190 (MVFL…VLMC), and 218–238 (FFLV…IQSL). Composition is skewed to basic and acidic residues over residues 264-276 (LKKS…GKST) and 283-298 (SHEK…SKLE). 4 disordered regions span residues 264–302 (LKKS…NEDE), 546–610 (LVVF…SYSI), 1123–1151 (NKQS…NLIL), and 1372–1436 (QQQN…SEDD). The span at 562-586 (DSGNIQNKSSDKTINPQNNLTNSKT) shows a compositional bias: polar residues. The span at 597 to 610 (TTEKEPKDDKSYSI) shows a compositional bias: basic and acidic residues. Residues 1123–1138 (NKQSLQKGNSKGNSNL) are compositionally biased toward polar residues. The segment covering 1372 to 1390 (QQQNQTTTKINTETKNQQK) has biased composition (low complexity). The stretch at 1384-1436 (ETKNQQKNRVENEENKETENQQNAETKNKQKSKTENEENKETENQQNDESEDD) forms a coiled coil. 2 stretches are compositionally biased toward basic and acidic residues: residues 1391–1402 (NRVENEENKETE) and 1409–1426 (TKNK…KETE).

Belongs to the TIC214 family. As to quaternary structure, part of the Tic complex.

The protein resides in the plastid. The protein localises to the chloroplast inner membrane. Involved in protein precursor import into chloroplasts. May be part of an intermediate translocation complex acting as a protein-conducting channel at the inner envelope. The protein is Protein TIC 214 of Cuscuta obtusiflora (Peruvian dodder).